A 196-amino-acid polypeptide reads, in one-letter code: Pyridoxal 5'-phosphate synthase subunit PdxT (196 aa).

47-49 contacts L-glutamine; it reads GES. The active-site Nucleophile is cysteine 79. L-glutamine-binding positions include arginine 106 and 134 to 135; that span reads IR. Residues histidine 170 and glutamate 172 each act as charge relay system in the active site.

It belongs to the glutaminase PdxT/SNO family. In the presence of PdxS, forms a dodecamer of heterodimers. Only shows activity in the heterodimer.

The catalysed reaction is aldehydo-D-ribose 5-phosphate + D-glyceraldehyde 3-phosphate + L-glutamine = pyridoxal 5'-phosphate + L-glutamate + phosphate + 3 H2O + H(+). It catalyses the reaction L-glutamine + H2O = L-glutamate + NH4(+). Its pathway is cofactor biosynthesis; pyridoxal 5'-phosphate biosynthesis. Catalyzes the hydrolysis of glutamine to glutamate and ammonia as part of the biosynthesis of pyridoxal 5'-phosphate. The resulting ammonia molecule is channeled to the active site of PdxS. The protein is Pyridoxal 5'-phosphate synthase subunit PdxT of Bacillus mycoides (strain KBAB4) (Bacillus weihenstephanensis).